We begin with the raw amino-acid sequence, 216 residues long: Large ribosomal subunit protein uL3 (216 aa).

Gln157 bears the N5-methylglutamine mark.

Belongs to the universal ribosomal protein uL3 family. As to quaternary structure, part of the 50S ribosomal subunit. Forms a cluster with proteins L14 and L19. Post-translationally, methylated by PrmB.

In terms of biological role, one of the primary rRNA binding proteins, it binds directly near the 3'-end of the 23S rRNA, where it nucleates assembly of the 50S subunit. The protein is Large ribosomal subunit protein uL3 of Stenotrophomonas maltophilia (strain R551-3).